Consider the following 107-residue polypeptide: U1-lycotoxin-Ls1b (107 aa).

An N-terminal signal peptide occupies residues 1–20; the sequence is MMKVLVVVALLVTLISYSSS. Positions 21–41 are excised as a propeptide; sequence EGIDDLEADELSSLMANEQTR. 4 cysteine pairs are disulfide-bonded: cysteine 44–cysteine 59, cysteine 51–cysteine 68, cysteine 58–cysteine 86, and cysteine 70–cysteine 84.

It belongs to the neurotoxin 19 (CSTX) family. 04 (U1-Lctx) subfamily. Expressed by the venom gland.

It localises to the secreted. The chain is U1-lycotoxin-Ls1b from Lycosa singoriensis (Wolf spider).